The following is a 64-amino-acid chain: MPKMKTDKGVAKRFKKTANGFKRKQAHLRHILTKKSTKRKRHLRAKCLVAKSDVPAIARQLPYA.

Belongs to the bacterial ribosomal protein bL35 family.

The sequence is that of Large ribosomal subunit protein bL35 from Shewanella frigidimarina (strain NCIMB 400).